The primary structure comprises 249 residues: tRNA (guanine-N(1)-)-methyltransferase (249 aa).

Residues glycine 117 and 137-142 (LGDFVL) contribute to the S-adenosyl-L-methionine site.

This sequence belongs to the RNA methyltransferase TrmD family. In terms of assembly, homodimer.

The protein localises to the cytoplasm. It catalyses the reaction guanosine(37) in tRNA + S-adenosyl-L-methionine = N(1)-methylguanosine(37) in tRNA + S-adenosyl-L-homocysteine + H(+). In terms of biological role, specifically methylates guanosine-37 in various tRNAs. This Janthinobacterium sp. (strain Marseille) (Minibacterium massiliensis) protein is tRNA (guanine-N(1)-)-methyltransferase.